A 593-amino-acid chain; its full sequence is Salivary alpha-glucosidase (593 aa).

The N-terminal stretch at 1 to 19 (MPPLGVLLLLVALGHSTQG) is a signal peptide. Aspartate 49, aspartate 51, aspartate 53, isoleucine 55, aspartate 57, and asparagine 130 together coordinate Ca(2+). Residues asparagine 130 and asparagine 163 are each glycosylated (N-linked (GlcNAc...) asparagine). The Ca(2+) site is built by aspartate 201, tyrosine 235, leucine 236, and glutamate 238. Asparagine 295, asparagine 310, asparagine 338, asparagine 414, asparagine 445, and asparagine 453 each carry an N-linked (GlcNAc...) asparagine glycan. Residue asparagine 338 participates in N-acetyl-beta-D-glucosamine binding.

It belongs to the glycosyl hydrolase 13 family. As to expression, saliva (at protein level). Proximal lateral lobes of the salivary gland (at protein level).

Its subcellular location is the secreted. It catalyses the reaction Hydrolysis of terminal, non-reducing (1-&gt;4)-linked alpha-D-glucose residues with release of alpha-D-glucose.. In terms of biological role, functions as a glucosidase that shows high activity toward sucrose, a major component of nectar. Assists the mosquito in its sugar-feeding capabilities. The protein is Salivary alpha-glucosidase of Anopheles gambiae (African malaria mosquito).